The chain runs to 725 residues: Catalase-peroxidase (725 aa).

The tryptophyl-tyrosyl-methioninium (Trp-Tyr) (with M-239) cross-link spans 90–213 (WHSAGTYRTG…LAAVQMGLIY (124 aa)). H91 functions as the Proton acceptor in the catalytic mechanism. The tryptophyl-tyrosyl-methioninium (Tyr-Met) (with W-90) cross-link spans 213–239 (YVNPEGPNGNPDPVAAAKDIRETFARM). H254 contacts heme b.

It belongs to the peroxidase family. Peroxidase/catalase subfamily. As to quaternary structure, homodimer or homotetramer. It depends on heme b as a cofactor. Post-translationally, formation of the three residue Trp-Tyr-Met cross-link is important for the catalase, but not the peroxidase activity of the enzyme.

It catalyses the reaction H2O2 + AH2 = A + 2 H2O. The catalysed reaction is 2 H2O2 = O2 + 2 H2O. Its function is as follows. Bifunctional enzyme with both catalase and broad-spectrum peroxidase activity. The protein is Catalase-peroxidase of Hahella chejuensis (strain KCTC 2396).